The following is a 314-amino-acid chain: Homoserine kinase (314 aa).

Residue 96–106 (PIGSGLGSSAC) coordinates ATP.

It belongs to the GHMP kinase family. Homoserine kinase subfamily.

The protein localises to the cytoplasm. It catalyses the reaction L-homoserine + ATP = O-phospho-L-homoserine + ADP + H(+). It functions in the pathway amino-acid biosynthesis; L-threonine biosynthesis; L-threonine from L-aspartate: step 4/5. In terms of biological role, catalyzes the ATP-dependent phosphorylation of L-homoserine to L-homoserine phosphate. This chain is Homoserine kinase, found in Haemophilus influenzae (strain 86-028NP).